The following is a 326-amino-acid chain: Peroxidase 43 (326 aa).

The signal sequence occupies residues 1–24; sequence MVWANAKMRLALSLVTVFFGISLA. Cystine bridges form between cysteine 35/cysteine 112, cysteine 68/cysteine 73, cysteine 118/cysteine 322, and cysteine 196/cysteine 228. The active-site Proton acceptor is the histidine 66. Ca(2+)-binding residues include aspartate 67, valine 70, glycine 72, aspartate 74, and serine 76. The N-linked (GlcNAc...) asparagine glycan is linked to asparagine 151. Proline 159 serves as a coordination point for substrate. Histidine 189 provides a ligand contact to heme b. Residue threonine 190 coordinates Ca(2+). Residues aspartate 241, serine 244, and aspartate 249 each contribute to the Ca(2+) site.

The protein belongs to the peroxidase family. Classical plant (class III) peroxidase subfamily. Requires heme b as cofactor. Ca(2+) serves as cofactor.

The protein localises to the secreted. It carries out the reaction 2 a phenolic donor + H2O2 = 2 a phenolic radical donor + 2 H2O. Functionally, removal of H(2)O(2), oxidation of toxic reductants, biosynthesis and degradation of lignin, suberization, auxin catabolism, response to environmental stresses such as wounding, pathogen attack and oxidative stress. These functions might be dependent on each isozyme/isoform in each plant tissue. The polypeptide is Peroxidase 43 (PER43) (Arabidopsis thaliana (Mouse-ear cress)).